A 232-amino-acid chain; its full sequence is Protein FAM228B (232 aa).

The protein belongs to the FAM228 family.

In Mus musculus (Mouse), this protein is Protein FAM228B (Fam228b).